We begin with the raw amino-acid sequence, 513 residues long: ATP synthase subunit alpha (513 aa).

169–176 (GDRQTGKT) contacts ATP.

Belongs to the ATPase alpha/beta chains family. As to quaternary structure, F-type ATPases have 2 components, CF(1) - the catalytic core - and CF(0) - the membrane proton channel. CF(1) has five subunits: alpha(3), beta(3), gamma(1), delta(1), epsilon(1). CF(0) has three main subunits: a(1), b(2) and c(9-12). The alpha and beta chains form an alternating ring which encloses part of the gamma chain. CF(1) is attached to CF(0) by a central stalk formed by the gamma and epsilon chains, while a peripheral stalk is formed by the delta and b chains.

It localises to the cell inner membrane. It catalyses the reaction ATP + H2O + 4 H(+)(in) = ADP + phosphate + 5 H(+)(out). Functionally, produces ATP from ADP in the presence of a proton gradient across the membrane. The alpha chain is a regulatory subunit. The sequence is that of ATP synthase subunit alpha from Vesicomyosocius okutanii subsp. Calyptogena okutanii (strain HA).